The chain runs to 199 residues: Prefoldin subunit 3 (199 aa).

M1 carries the post-translational modification N-acetylmethionine.

Belongs to the prefoldin subunit alpha family. In terms of assembly, heterohexamer of two PFD-alpha type and four PFD-beta type subunits.

Binds specifically to cytosolic chaperonin (c-CPN) and transfers target proteins to it. Binds to nascent polypeptide chain and promotes folding in an environment in which there are many competing pathways for nonnative proteins. This chain is Prefoldin subunit 3 (PAC10), found in Saccharomyces cerevisiae (strain ATCC 204508 / S288c) (Baker's yeast).